Consider the following 183-residue polypeptide: Ribosome-recycling factor (183 aa).

This sequence belongs to the RRF family.

The protein resides in the cytoplasm. Responsible for the release of ribosomes from messenger RNA at the termination of protein biosynthesis. May increase the efficiency of translation by recycling ribosomes from one round of translation to another. The chain is Ribosome-recycling factor from Deinococcus deserti (strain DSM 17065 / CIP 109153 / LMG 22923 / VCD115).